The chain runs to 102 residues: Large ribosomal subunit protein bL21 (102 aa).

This sequence belongs to the bacterial ribosomal protein bL21 family. Part of the 50S ribosomal subunit. Contacts protein L20.

Functionally, this protein binds to 23S rRNA in the presence of protein L20. The polypeptide is Large ribosomal subunit protein bL21 (Geotalea uraniireducens (strain Rf4) (Geobacter uraniireducens)).